The primary structure comprises 330 residues: Aspartate--ammonia ligase (330 aa).

The protein belongs to the class-II aminoacyl-tRNA synthetase family. AsnA subfamily.

Its subcellular location is the cytoplasm. The enzyme catalyses L-aspartate + NH4(+) + ATP = L-asparagine + AMP + diphosphate + H(+). Its pathway is amino-acid biosynthesis; L-asparagine biosynthesis; L-asparagine from L-aspartate (ammonia route): step 1/1. This Actinobacillus pleuropneumoniae serotype 7 (strain AP76) protein is Aspartate--ammonia ligase.